The chain runs to 117 residues: Large ribosomal subunit protein eL18 (117 aa).

The protein belongs to the eukaryotic ribosomal protein eL18 family.

In Archaeoglobus fulgidus (strain ATCC 49558 / DSM 4304 / JCM 9628 / NBRC 100126 / VC-16), this protein is Large ribosomal subunit protein eL18.